A 1049-amino-acid chain; its full sequence is Probable disease resistance protein RF9 (1049 aa).

Positions Q25–L41 form a coiled coil. Positions G139 to D158 are disordered. Over residues Q144–D158 the composition is skewed to basic and acidic residues. Positions K147–Y460 constitute an NB-ARC domain. G190–T197 contributes to the ATP binding site. LRR repeat units lie at residues L584–Q608, L609–L634, M657–K682, L683–T707, P776–K799, L800–Q827, M849–S873, L896–Q923, M945–Q968, and M990–Y1015.

This sequence belongs to the disease resistance NB-LRR family.

Its function is as follows. Potential disease resistance protein. The chain is Probable disease resistance protein RF9 (RF9) from Arabidopsis thaliana (Mouse-ear cress).